We begin with the raw amino-acid sequence, 331 residues long: Beta-hexosaminidase (331 aa).

Residues aspartate 60, arginine 68, arginine 133, and 163 to 164 each bind substrate; that span reads KH. Catalysis depends on histidine 176, which acts as the Proton donor/acceptor. The active-site Nucleophile is aspartate 247.

The protein belongs to the glycosyl hydrolase 3 family. NagZ subfamily.

Its subcellular location is the cytoplasm. The enzyme catalyses Hydrolysis of terminal non-reducing N-acetyl-D-hexosamine residues in N-acetyl-beta-D-hexosaminides.. It functions in the pathway cell wall biogenesis; peptidoglycan recycling. Plays a role in peptidoglycan recycling by cleaving the terminal beta-1,4-linked N-acetylglucosamine (GlcNAc) from peptide-linked peptidoglycan fragments, giving rise to free GlcNAc, anhydro-N-acetylmuramic acid and anhydro-N-acetylmuramic acid-linked peptides. The sequence is that of Beta-hexosaminidase from Xanthomonas campestris pv. campestris (strain B100).